The following is a 467-amino-acid chain: Glycogen synthase (467 aa).

An ADP-alpha-D-glucose-binding site is contributed by Lys-16.

Belongs to the glycosyltransferase 1 family. Bacterial/plant glycogen synthase subfamily.

The catalysed reaction is [(1-&gt;4)-alpha-D-glucosyl](n) + ADP-alpha-D-glucose = [(1-&gt;4)-alpha-D-glucosyl](n+1) + ADP + H(+). It participates in glycan biosynthesis; glycogen biosynthesis. Its function is as follows. Synthesizes alpha-1,4-glucan chains using ADP-glucose. This Paracoccus denitrificans (strain Pd 1222) protein is Glycogen synthase.